A 557-amino-acid chain; its full sequence is Carboxypeptidase Y homolog A (557 aa).

The N-terminal stretch at 1–17 is a signal peptide; the sequence is MRVLPAAMLVGAATAAV. The propeptide occupies 18-138; sequence PPFQQVLGGN…KLEAYDLRVK (121 aa). 5 cysteine pairs are disulfide-bonded: Cys-193–Cys-433, Cys-327–Cys-341, Cys-351–Cys-374, Cys-358–Cys-367, and Cys-396–Cys-403. N-linked (GlcNAc...) asparagine glycosylation occurs at Asn-224. Ser-280 is an active-site residue. Asp-472 is an active-site residue. Asn-523 is a glycosylation site (N-linked (GlcNAc...) asparagine). His-534 is an active-site residue.

This sequence belongs to the peptidase S10 family.

It localises to the vacuole. The catalysed reaction is Release of a C-terminal amino acid with broad specificity.. Vacuolar carboxypeptidase involved in degradation of small peptides. Digests preferentially peptides containing an aliphatic or hydrophobic residue in P1' position, as well as methionine, leucine or phenylalanine in P1 position of ester substrate. In Aspergillus niger (strain ATCC MYA-4892 / CBS 513.88 / FGSC A1513), this protein is Carboxypeptidase Y homolog A (cpyA).